The following is a 122-amino-acid chain: Holo-[acyl-carrier-protein] synthase (122 aa).

2 residues coordinate Mg(2+): aspartate 8 and glutamate 57.

The protein belongs to the P-Pant transferase superfamily. AcpS family. It depends on Mg(2+) as a cofactor.

The protein localises to the cytoplasm. It catalyses the reaction apo-[ACP] + CoA = holo-[ACP] + adenosine 3',5'-bisphosphate + H(+). Transfers the 4'-phosphopantetheine moiety from coenzyme A to a Ser of acyl-carrier-protein. This is Holo-[acyl-carrier-protein] synthase from Exiguobacterium sp. (strain ATCC BAA-1283 / AT1b).